Reading from the N-terminus, the 518-residue chain is Cytochrome P450 26C1 (518 aa).

The chain crosses the membrane as a helical span at residues 293-313; that stretch reads LLFAAFFTTASASTSLILLLL. Cys-455 provides a ligand contact to heme.

The protein belongs to the cytochrome P450 family. Requires heme as cofactor.

It is found in the membrane. It carries out the reaction an organic molecule + reduced [NADPH--hemoprotein reductase] + O2 = an alcohol + oxidized [NADPH--hemoprotein reductase] + H2O + H(+). The enzyme catalyses all-trans-retinoate + reduced [NADPH--hemoprotein reductase] + O2 = all-trans-4-hydroxyretinoate + oxidized [NADPH--hemoprotein reductase] + H2O + H(+). It catalyses the reaction all-trans-4-hydroxyretinoate + reduced [NADPH--hemoprotein reductase] + O2 = all-trans-4-oxoretinoate + oxidized [NADPH--hemoprotein reductase] + 2 H2O + H(+). The catalysed reaction is 9-cis-retinoate + reduced [NADPH--hemoprotein reductase] + O2 = 9-cis-4-hydroxyretinoate + oxidized [NADPH--hemoprotein reductase] + H2O + H(+). It carries out the reaction 9-cis-4-hydroxyretinoate + reduced [NADPH--hemoprotein reductase] + O2 = 9-cis-4-oxoretinoate + oxidized [NADPH--hemoprotein reductase] + 2 H2O + H(+). The enzyme catalyses all-trans-4-hydroxy-13,14-dihydroretinoate + reduced [NADPH--hemoprotein reductase] + O2 = all-trans-4-oxo-13,14-dihydroretinoate + oxidized [NADPH--hemoprotein reductase] + 2 H2O + H(+). It catalyses the reaction all-trans-13,14-dihydroretinoate + reduced [NADPH--hemoprotein reductase] + O2 = all-trans-4-hydroxy-13,14-dihydroretinoate + oxidized [NADPH--hemoprotein reductase] + H2O + H(+). Functionally, a cytochrome P450 monooxygenase involved in the metabolism of retinoates (RAs), the active metabolites of vitamin A, and critical signaling molecules in animals. RAs exist as at least four different isomers: all-trans-RA (atRA), 9-cis-RA, 13-cis-RA, and 9,13-dicis-RA, where atRA is considered to be the biologically active isomer, although 9-cis-RA and 13-cis-RA also have activity. Catalyzes the oxidation of atRA primarily at C-4. Oxidation of atRA limits its biological activity and initiates a degradative process leading to its eventual elimination, thereby contributes to the regulation of atRA homeostasis and signaling. Able to metabolize other RAs such as 9-cis with high efficiency. Can oxidize all-trans-13,14-dihydroretinoate (DRA) to metabolites which could include all-trans-4-oxo-DRA, all-trans-4-hydroxy-DRA, all-trans-5,8-epoxy-DRA, and all-trans-18-hydroxy-DRA. Shares sequence similarity with other CYP26 family members, but has higher affinity to 9-cis-RA and is much less sensitive to the inhibitory effects of ketoconazole. In cooperation with Cyp26a1, contributes to the CNS patterning and the development of regions of higher visual acuity. The protein is Cytochrome P450 26C1 of Mus musculus (Mouse).